The following is a 468-amino-acid chain: Aldehyde dehydrogenase family 3 member B1 (468 aa).

Met1 carries the post-translational modification N-acetylmethionine. 188 to 193 (GNAYVG) is a binding site for NAD(+). Residues Glu210 and Cys244 contribute to the active site. Residues Cys462 and Cys463 are each lipidated (S-palmitoyl cysteine). A Cysteine methyl ester modification is found at Cys465. Cys465 is lipidated: S-geranylgeranyl cysteine. Positions 466–468 (TLL) are cleaved as a propeptide — removed in mature form.

This sequence belongs to the aldehyde dehydrogenase family. In terms of processing, dually lipidated in the C-terminus; prenylation occurs prior to, and is a prerequisite for palmitoylation. It is also required for activity towards long-chain substrates. Highly expressed in kidney and liver. In brain is expressed at moderate levels in cortex, striatum and hippocampus, and at lower levels in brainstem and cerebellum.

It localises to the cell membrane. The enzyme catalyses an aldehyde + NAD(+) + H2O = a carboxylate + NADH + 2 H(+). It catalyses the reaction a long-chain fatty aldehyde + NAD(+) + H2O = a long-chain fatty acid + NADH + 2 H(+). The catalysed reaction is a medium-chain fatty aldehyde + NAD(+) + H2O = a medium-chain fatty acid + NADH + 2 H(+). It carries out the reaction octanal + NAD(+) + H2O = octanoate + NADH + 2 H(+). The enzyme catalyses nonanal + NAD(+) + H2O = nonanoate + NADH + 2 H(+). It catalyses the reaction hexadecanoate + NADH + 2 H(+) = hexadecanal + NAD(+) + H2O. The catalysed reaction is (2E)-octenal + NAD(+) + H2O = (2E)-octenoate + NADH + 2 H(+). It carries out the reaction (E)-non-2-enal + NAD(+) + H2O = (E)-non-2-enoate + NADH + 2 H(+). The enzyme catalyses (E)-4-hydroxynon-2-enal + NAD(+) + H2O = (E)-4-hydroxynon-2-enoate + NADH + 2 H(+). It catalyses the reaction (2E)-hexadecenal + NAD(+) + H2O = (E)-hexadec-2-enoate + NADH + 2 H(+). The catalysed reaction is benzaldehyde + NAD(+) + H2O = benzoate + NADH + 2 H(+). It carries out the reaction an aldehyde + NADP(+) + H2O = a carboxylate + NADPH + 2 H(+). The enzyme catalyses a medium-chain fatty aldehyde + NADP(+) + H2O = a medium-chain fatty acid + NADPH + 2 H(+). It catalyses the reaction hexanal + NADP(+) + H2O = hexanoate + NADPH + 2 H(+). The catalysed reaction is octanal + NADP(+) + H2O = octanoate + NADPH + 2 H(+). It carries out the reaction nonanal + NADP(+) + H2O = nonanoate + NADPH + 2 H(+). The enzyme catalyses (2E)-octenal + NADP(+) + H2O = (2E)-octenoate + NADPH + 2 H(+). It catalyses the reaction (E)-non-2-enal + NADP(+) + H2O = (E)-non-2-enoate + NADPH + 2 H(+). The catalysed reaction is (E)-4-hydroxynon-2-enal + NADP(+) + H2O = (E)-4-hydroxynon-2-enoate + NADPH + 2 H(+). It carries out the reaction benzaldehyde + NADP(+) + H2O = benzoate + NADPH + 2 H(+). It participates in alcohol metabolism; ethanol degradation; acetate from ethanol: step 2/2. Functionally, oxidizes medium and long chain saturated and unsaturated fatty aldehydes generated in the plasma membrane into non-toxic fatty acids. May have a protective role against the cytotoxicity induced by lipid peroxidation. Short-chain fatty aldehydes are not good substrates. Can use both NADP(+) and NAD(+) as electron acceptor in vitro, however in vivo preference will depend on their tissue levels. Low activity towards acetaldehyde and 3,4-dihydroxyphenylacetaldehyde. Able to metabolize aromatic aldehydes such as benzaldehyde to their acid form. This chain is Aldehyde dehydrogenase family 3 member B1 (Aldh3b1), found in Mus musculus (Mouse).